The sequence spans 119 residues: uncharacterized protein (119 aa).

Residues 55–119 (LSTEPPTPPS…SRLPPRSWTN (65 aa)) form a disordered region. Residues 81-92 (LSYTRCHSTTYT) are compositionally biased toward polar residues.

This is an uncharacterized protein from Saccharomyces cerevisiae (strain ATCC 204508 / S288c) (Baker's yeast).